We begin with the raw amino-acid sequence, 333 residues long: Casein kinase II subunit alpha-2 (333 aa).

The 286-residue stretch at 34 to 319 folds into the Protein kinase domain; sequence YEVVRKVGRG…AREAMAHPYF (286 aa). Residues 40–48 and lysine 63 each bind ATP; that span reads VGRGKYSEV. The active-site Proton acceptor is the aspartate 151.

This sequence belongs to the protein kinase superfamily. Ser/Thr protein kinase family. CK2 subfamily. Monomer. Autophosphorylated.

The protein resides in the cytoplasm. It carries out the reaction L-seryl-[protein] + ATP = O-phospho-L-seryl-[protein] + ADP + H(+). The enzyme catalyses L-threonyl-[protein] + ATP = O-phospho-L-threonyl-[protein] + ADP + H(+). Functionally, casein kinases are operationally defined by their preferential utilization of acidic proteins such as caseins as substrates. It can phosphorylate a large number of proteins. Involved in photoperiod sensitivity (PS). Increases days-to-heading under natural day (ND) and long day (LD) conditions, but not under short day (SD) conditions. In Oryza sativa subsp. indica (Rice), this protein is Casein kinase II subunit alpha-2.